Reading from the N-terminus, the 400-residue chain is Argininosuccinate synthase (400 aa).

Residues 10-18 and Ala38 contribute to the ATP site; that span reads AYSGGVDTS. Tyr89 provides a ligand contact to L-citrulline. Gly119 serves as a coordination point for ATP. Residues Thr121, Asn125, and Asp126 each contribute to the L-aspartate site. Asn125 contacts L-citrulline. L-citrulline is bound by residues Arg129, Ser177, Ser186, Glu262, and Tyr274.

It belongs to the argininosuccinate synthase family. Type 1 subfamily. As to quaternary structure, homotetramer.

Its subcellular location is the cytoplasm. It catalyses the reaction L-citrulline + L-aspartate + ATP = 2-(N(omega)-L-arginino)succinate + AMP + diphosphate + H(+). The protein operates within amino-acid biosynthesis; L-arginine biosynthesis; L-arginine from L-ornithine and carbamoyl phosphate: step 2/3. The protein is Argininosuccinate synthase of Prochlorococcus marinus (strain NATL1A).